A 526-amino-acid polypeptide reads, in one-letter code: Protein ERGIC-53-like (526 aa).

An N-terminal signal peptide occupies residues M1–T25. Over G26–Q462 the chain is Lumenal. The 222-residue stretch at R31–L252 folds into the L-type lectin-like domain. N75 carries an N-linked (GlcNAc...) asparagine glycan. An intrachain disulfide couples C176 to C215. A helical transmembrane segment spans residues P463 to F483. At R484 to A526 the chain is on the cytoplasmic side.

As to expression, highly expressed in normal and neoplastic prostate. Also expressed in cardiac atrium, salivary gland, spleen and selective cells in the CNS.

The protein resides in the endoplasmic reticulum-Golgi intermediate compartment membrane. In Homo sapiens (Human), this protein is Protein ERGIC-53-like (LMAN1L).